Here is a 202-residue protein sequence, read N- to C-terminus: NADH-quinone oxidoreductase subunit C (202 aa).

Belongs to the complex I 30 kDa subunit family. As to quaternary structure, NDH-1 is composed of 14 different subunits. Subunits NuoB, C, D, E, F, and G constitute the peripheral sector of the complex.

It is found in the cell inner membrane. It catalyses the reaction a quinone + NADH + 5 H(+)(in) = a quinol + NAD(+) + 4 H(+)(out). Its function is as follows. NDH-1 shuttles electrons from NADH, via FMN and iron-sulfur (Fe-S) centers, to quinones in the respiratory chain. The immediate electron acceptor for the enzyme in this species is believed to be ubiquinone. Couples the redox reaction to proton translocation (for every two electrons transferred, four hydrogen ions are translocated across the cytoplasmic membrane), and thus conserves the redox energy in a proton gradient. In Paracidovorax citrulli (strain AAC00-1) (Acidovorax citrulli), this protein is NADH-quinone oxidoreductase subunit C.